A 426-amino-acid polypeptide reads, in one-letter code: Large envelope protein (426 aa).

A lipid anchor (N-myristoyl glycine; by host) is attached at Gly2. Positions 2–143 (GNNIKVTFNP…PPLRDTHPHL (142 aa)) are pre-S1. A pre-S region spans residues 2–202 (GNNIKVTFNP…PSTTGDPAQS (201 aa)). The Virion surface; in external conformation segment spans residues 2 to 209 (GNNIKVTFNP…AQSPEMSPSS (208 aa)). Residues 2 to 281 (GNNIKVTFNP…NGFRWMYLRR (280 aa)) lie on the Intravirion; in internal conformation side of the membrane. Asn3 carries an N-linked (GlcNAc...) asparagine glycan. Positions 107 to 142 (IRDIPRGLVPPQTPTNRDQGRKPTPPTPPLRDTHPH) are disordered. Residues 144-202 (TMKNQTFHLQGFVDGLRDLTTTERQHNAYGDPFTTLSPVVPTVSTILSPPSTTGDPAQS) are pre-S2. A helical membrane pass occupies residues 210 to 230 (LLGLLAGLQVVYFLWTKILTI). Residues 231–281 (AQNLDWWWTSLSFPGGIPECTGQNSQFQTCKHLPTSCPPTCNGFRWMYLRR) are Intravirion; in external conformation-facing. The helical transmembrane segment at 282 to 302 (FIIYLLVLLLCLIFLLVLLDW) threads the bilayer. The Virion surface segment spans residues 303–374 (KGLIPVCPIQ…WALARFSWLN (72 aa)). Asn346 carries N-linked (GlcNAc...) asparagine; by host glycosylation. A helical transmembrane segment spans residues 375 to 395 (LLVPLLQWLGGISLIAWFLLI). At 396-401 (WMIWFW) the chain is on the intravirion side. Residues 402–424 (GPALLSILPPFIPIFVLFFLIWV) form a helical membrane-spanning segment. Topologically, residues 425–426 (YI) are virion surface.

It belongs to the orthohepadnavirus major surface antigen family. In its internal form (Li-HBsAg), interacts with the capsid protein and with the isoform S. Interacts with host chaperone CANX. In terms of assembly, associates with host chaperone CANX through its pre-S2 N glycan; this association may be essential for isoform M proper secretion. As to quaternary structure, interacts with isoform L. Interacts with the antigens of satellite virus HDV (HDVAgs); this interaction is required for encapsidation of HDV genomic RNA. In terms of processing, isoform M is N-terminally acetylated by host at a ratio of 90%, and N-glycosylated by host at the pre-S2 region. Post-translationally, myristoylated.

Its subcellular location is the virion membrane. Its function is as follows. The large envelope protein exists in two topological conformations, one which is termed 'external' or Le-HBsAg and the other 'internal' or Li-HBsAg. In its external conformation the protein attaches the virus to cell receptors and thereby initiating infection. This interaction determines the species specificity and liver tropism. This attachment induces virion internalization predominantly through caveolin-mediated endocytosis. The large envelope protein also assures fusion between virion membrane and endosomal membrane. In its internal conformation the protein plays a role in virion morphogenesis and mediates the contact with the nucleocapsid like a matrix protein. Functionally, the middle envelope protein plays an important role in the budding of the virion. It is involved in the induction of budding in a nucleocapsid independent way. In this process the majority of envelope proteins bud to form subviral lipoprotein particles of 22 nm of diameter that do not contain a nucleocapsid. The polypeptide is Large envelope protein (Marmota monax (Woodchuck)).